We begin with the raw amino-acid sequence, 606 residues long: Calmegin (606 aa).

The N-terminal stretch at 1-19 is a signal peptide; that stretch reads MRFQGFWLCLGLLFISVNA. Topologically, residues 20 to 466 are lumenal; that stretch reads EFMDDSVEME…QLMSATEQRP (447 aa). At Lys-124 the chain carries N6-acetyllysine. Cysteines 147 and 181 form a disulfide. The tract at residues 255–308 is disordered; it reads PPINPPKEIEDPTDEKPDDWDERAKIPDASAVKPEDWDESEPPQIVDSSAVKPD. A run of 8 repeats spans residues 263 to 276, 280 to 293, 299 to 312, 318 to 331, 335 to 348, 352 to 365, 366 to 379, and 380 to 393. The span at 265–275 shows a compositional bias: acidic residues; that stretch reads DPTDEKPDDWD. The segment at 313 to 346 is interaction with PPIB; that stretch reads NEPEFIPDPNAEKPFDWNEDMDGEWEAPHISNPA. An intrachain disulfide couples Cys-347 to Cys-351. Residues 467–487 traverse the membrane as a helical segment; sequence WLWFIYLLTAALPIALIGSFC. The Cytoplasmic portion of the chain corresponds to 488–606; it reads WPRKVKKKYE…SVRKRRVRKE (119 aa). The segment covering 518–544 has biased composition (basic and acidic residues); the sequence is EVKEEKAALEKPVDLEEEKKQSDGEIV. A disordered region spans residues 518 to 606; the sequence is EVKEEKAALE…SVRKRRVRKE (89 aa). The segment covering 545-567 has biased composition (acidic residues); the sequence is EKEEEGEPEEKSEEEIEIIEGQE. Phosphoserine is present on residues Ser-556, Ser-572, Ser-575, Ser-577, Ser-587, Ser-590, and Ser-597. Residues 568–579 are compositionally biased toward basic and acidic residues; sequence EGNKSNKSGSED. A compositionally biased stretch (basic residues) spans 597–606; that stretch reads SVRKRRVRKE.

This sequence belongs to the calreticulin family. As to quaternary structure, interacts with PPIB and PDILT. Interacts with ADAM2.

Its subcellular location is the endoplasmic reticulum membrane. Functions during spermatogenesis as a chaperone for a range of client proteins that are important for sperm adhesion onto the egg zona pellucida and for subsequent penetration of the zona pellucida. Required for normal sperm migration from the uterus into the oviduct. Required for normal male fertility. Binds calcium ions. The chain is Calmegin (CLGN) from Bos taurus (Bovine).